The chain runs to 696 residues: Elongation factor G (696 aa).

The tr-type G domain occupies 8 to 290 (ERYRNIGVMA…AVLDYLPSPA (283 aa)). GTP contacts are provided by residues 17–24 (AHIDAGKT), 88–92 (DTPGH), and 142–145 (NKMD).

It belongs to the TRAFAC class translation factor GTPase superfamily. Classic translation factor GTPase family. EF-G/EF-2 subfamily.

It is found in the cytoplasm. Catalyzes the GTP-dependent ribosomal translocation step during translation elongation. During this step, the ribosome changes from the pre-translocational (PRE) to the post-translocational (POST) state as the newly formed A-site-bound peptidyl-tRNA and P-site-bound deacylated tRNA move to the P and E sites, respectively. Catalyzes the coordinated movement of the two tRNA molecules, the mRNA and conformational changes in the ribosome. This Nitrosospira multiformis (strain ATCC 25196 / NCIMB 11849 / C 71) protein is Elongation factor G.